A 133-amino-acid polypeptide reads, in one-letter code: UPF0134 protein MPN_151 (133 aa).

Belongs to the UPF0134 family.

The sequence is that of UPF0134 protein MPN_151 from Mycoplasma pneumoniae (strain ATCC 29342 / M129 / Subtype 1) (Mycoplasmoides pneumoniae).